A 170-amino-acid chain; its full sequence is Transcription factor E (170 aa).

One can recognise an HTH TFE/IIEalpha-type domain in the interval 1 to 93 (MKEAYLYIVE…TWYVDDEIIR (93 aa)).

The protein belongs to the TFE family. As to quaternary structure, monomer. Interaction with RNA polymerase subunits RpoF and RpoE is necessary for Tfe stimulatory transcription activity. Able to interact with Tbp and RNA polymerase in the absence of DNA promoter. Interacts both with the preinitiation and elongation complexes.

Transcription factor that plays a role in the activation of archaeal genes transcribed by RNA polymerase. Facilitates transcription initiation by enhancing TATA-box recognition by TATA-box-binding protein (Tbp), and transcription factor B (Tfb) and RNA polymerase recruitment. Not absolutely required for transcription in vitro, but particularly important in cases where Tbp or Tfb function is not optimal. It dynamically alters the nucleic acid-binding properties of RNA polymerases by stabilizing the initiation complex and destabilizing elongation complexes. Seems to translocate with the RNA polymerase following initiation and acts by binding to the non template strand of the transcription bubble in elongation complexes. The protein is Transcription factor E of Pyrobaculum islandicum (strain DSM 4184 / JCM 9189 / GEO3).